The sequence spans 189 residues: Xanthine phosphoribosyltransferase (189 aa).

The xanthine site is built by Leu-20 and Asn-27. 128–132 is a 5-phospho-alpha-D-ribose 1-diphosphate binding site; that stretch reads ANGEA. Lys-156 is a binding site for xanthine.

Belongs to the purine/pyrimidine phosphoribosyltransferase family. Xpt subfamily. In terms of assembly, homodimer.

The protein resides in the cytoplasm. The catalysed reaction is XMP + diphosphate = xanthine + 5-phospho-alpha-D-ribose 1-diphosphate. Its pathway is purine metabolism; XMP biosynthesis via salvage pathway; XMP from xanthine: step 1/1. In terms of biological role, converts the preformed base xanthine, a product of nucleic acid breakdown, to xanthosine 5'-monophosphate (XMP), so it can be reused for RNA or DNA synthesis. The chain is Xanthine phosphoribosyltransferase from Lactobacillus delbrueckii subsp. bulgaricus (strain ATCC 11842 / DSM 20081 / BCRC 10696 / JCM 1002 / NBRC 13953 / NCIMB 11778 / NCTC 12712 / WDCM 00102 / Lb 14).